The sequence spans 192 residues: N-terminal acetyltransferase A complex catalytic subunit NAA10 (192 aa).

The 151-residue stretch at 2-152 (VCIRRATVDD…DAYDMRKNLK (151 aa)) folds into the N-acetyltransferase domain.

Belongs to the acetyltransferase family. ARD1 subfamily. In terms of assembly, part of the NatA complex. Interacts with NAA15. In terms of tissue distribution, expressed in leaves, roots, shoots and flowers.

It catalyses the reaction N-terminal glycyl-[protein] + acetyl-CoA = N-terminal N(alpha)-acetylglycyl-[protein] + CoA + H(+). It carries out the reaction N-terminal L-alanyl-[protein] + acetyl-CoA = N-terminal N(alpha)-acetyl-L-alanyl-[protein] + CoA + H(+). The catalysed reaction is N-terminal L-seryl-[protein] + acetyl-CoA = N-terminal N(alpha)-acetyl-L-seryl-[protein] + CoA + H(+). The enzyme catalyses N-terminal L-valyl-[protein] + acetyl-CoA = N-terminal N(alpha)-acetyl-L-valyl-[protein] + CoA + H(+). It catalyses the reaction N-terminal L-cysteinyl-[protein] + acetyl-CoA = N-terminal N(alpha)-acetyl-L-cysteinyl-[protein] + CoA + H(+). It carries out the reaction N-terminal L-threonyl-[protein] + acetyl-CoA = N-terminal N(alpha)-acetyl-L-threonyl-[protein] + CoA + H(+). Catalytic subunit of the NatA N-alpha-acetyltransferase complex. Required for male gametocyte development, embryogenesis, suspensor development and the formation of the quiescent center (QC) in the root meristem. Involved in plant immunity through the regulation of SNC1 and RPM1 stability. In Arabidopsis thaliana (Mouse-ear cress), this protein is N-terminal acetyltransferase A complex catalytic subunit NAA10.